The sequence spans 427 residues: Glutamate-1-semialdehyde 2,1-aminomutase 2 (427 aa).

The residue at position 267 (Lys-267) is an N6-(pyridoxal phosphate)lysine.

This sequence belongs to the class-III pyridoxal-phosphate-dependent aminotransferase family. HemL subfamily. As to quaternary structure, homodimer. Pyridoxal 5'-phosphate is required as a cofactor.

Its subcellular location is the cytoplasm. The enzyme catalyses (S)-4-amino-5-oxopentanoate = 5-aminolevulinate. The protein operates within porphyrin-containing compound metabolism; protoporphyrin-IX biosynthesis; 5-aminolevulinate from L-glutamyl-tRNA(Glu): step 2/2. In Staphylococcus haemolyticus (strain JCSC1435), this protein is Glutamate-1-semialdehyde 2,1-aminomutase 2.